A 592-amino-acid polypeptide reads, in one-letter code: NADH-quinone oxidoreductase subunit C/D (592 aa).

Positions 1-183 (MLTEFNSIPA…GPYILTEEKE (183 aa)) are NADH dehydrogenase I subunit C. Residues 207-592 (DFMFLNLGPN…IDFVMADVDR (386 aa)) are NADH dehydrogenase I subunit D.

This sequence in the N-terminal section; belongs to the complex I 30 kDa subunit family. It in the C-terminal section; belongs to the complex I 49 kDa subunit family. In terms of assembly, NDH-1 is composed of 13 different subunits. Subunits NuoB, CD, E, F, and G constitute the peripheral sector of the complex.

Its subcellular location is the cell inner membrane. The catalysed reaction is a quinone + NADH + 5 H(+)(in) = a quinol + NAD(+) + 4 H(+)(out). NDH-1 shuttles electrons from NADH, via FMN and iron-sulfur (Fe-S) centers, to quinones in the respiratory chain. The immediate electron acceptor for the enzyme in this species is believed to be ubiquinone. Couples the redox reaction to proton translocation (for every two electrons transferred, four hydrogen ions are translocated across the cytoplasmic membrane), and thus conserves the redox energy in a proton gradient. This chain is NADH-quinone oxidoreductase subunit C/D, found in Acidiphilium cryptum (strain JF-5).